Reading from the N-terminus, the 820-residue chain is Trimethylamine-N-oxide reductase (820 aa).

Residues 1–33 (MAITRRSFLKGVATTSAASVIGPSLLASASANA) constitute a signal peptide (tat-type signal). Ser-179 is a binding site for Mo-bis(molybdopterin guanine dinucleotide).

The protein belongs to the prokaryotic molybdopterin-containing oxidoreductase family. Mo-bis(molybdopterin guanine dinucleotide) is required as a cofactor. In terms of processing, predicted to be exported by the Tat system. The position of the signal peptide cleavage has not been experimentally proven.

Its subcellular location is the periplasm. It carries out the reaction trimethylamine + 2 Fe(III)-[cytochrome c] + H2O = trimethylamine N-oxide + 2 Fe(II)-[cytochrome c] + 3 H(+). In terms of biological role, reduces trimethylamine-N-oxide (TMAO) into trimethylamine; an anaerobic reaction coupled to energy-yielding reactions. This is Trimethylamine-N-oxide reductase (torA) from Vibrio parahaemolyticus serotype O3:K6 (strain RIMD 2210633).